The chain runs to 137 residues: Probable glycine cleavage system H protein 1 (137 aa).

The Lipoyl-binding domain occupies 31 to 113 (VAVIGITDYA…YGEGWIFKLK (83 aa)). Lys-72 carries the post-translational modification N6-lipoyllysine.

It belongs to the GcvH family. The glycine cleavage system is composed of four proteins: P, T, L and H. The cofactor is (R)-lipoate.

The glycine cleavage system catalyzes the degradation of glycine. The H protein shuttles the methylamine group of glycine from the P protein to the T protein. The protein is Probable glycine cleavage system H protein 1 of Saccharolobus solfataricus (strain ATCC 35092 / DSM 1617 / JCM 11322 / P2) (Sulfolobus solfataricus).